The sequence spans 385 residues: MTSIGIVSPQSMFFDTPLPLQSGAQITDYTLVYETYGTLNADHSNAVLVCHALNASHHVAGTYSEDAGTTGWWDNMVGPGKPLDTNKYFVIGVNNLGSCFGSTGPMHINPATGKQYGAHFPVVTVEDWVQSQARLADALGIKQFAAVMGGSLGGMQALAWSILFPERLRHCVVIASTPKLTAQNIAFDDVARQAILTDPDYHGGDFYAHGVVPKNGLRVARMLGHITYLSDDDMAAKFGRELRSGSYQFGFGIDFEIESYLRYQGDKFSTYFDANTYLLITKALDYFDPAKDFGGDLTKTLSNTRAKFLLVSFTTDWRFSPERSHEMVQALVNNNRTVTYAEIDAPHGHDAFLLDDQRYMNVVRSYFERAYEEIDGGSLKAGASA.

Positions 45 to 355 constitute an AB hydrolase-1 domain; it reads NAVLVCHALN…PHGHDAFLLD (311 aa). Ser151 serves as the catalytic Nucleophile. Arg221 serves as a coordination point for substrate. Active-site residues include Asp316 and His349. Asp350 contributes to the substrate binding site.

It belongs to the AB hydrolase superfamily. MetX family. Homodimer.

It localises to the cytoplasm. It catalyses the reaction L-homoserine + succinyl-CoA = O-succinyl-L-homoserine + CoA. It participates in amino-acid biosynthesis; L-methionine biosynthesis via de novo pathway; O-succinyl-L-homoserine from L-homoserine: step 1/1. Transfers a succinyl group from succinyl-CoA to L-homoserine, forming succinyl-L-homoserine. The protein is Homoserine O-succinyltransferase of Janthinobacterium sp. (strain Marseille) (Minibacterium massiliensis).